The sequence spans 496 residues: Beta-N-acetylhexosaminidase (496 aa).

Glu298 acts as the Proton donor in catalysis.

The protein belongs to the glycosyl hydrolase 20 family.

It catalyses the reaction Hydrolysis of terminal non-reducing N-acetyl-D-hexosamine residues in N-acetyl-beta-D-hexosaminides.. The protein operates within glycan degradation; chitin degradation. Its function is as follows. Catalyzes the cleavage of beta-N-acetylglucosaminides and beta-N-acetylgalactosaminides. Also catalyzes the hydrolysis of N-acetylchitooligomers. May be involved in chitin degradation. It is not able to cleave beta-glucosides. The chain is Beta-N-acetylhexosaminidase (hex20) from Cellulomonas fimi.